Reading from the N-terminus, the 56-residue chain is Large ribosomal subunit protein bL32 (56 aa).

The disordered stretch occupies residues 1-21; the sequence is MAVQQNRKTRSRRGMRRSHDA. Over residues 7 to 16 the composition is skewed to basic residues; the sequence is RKTRSRRGMR.

It belongs to the bacterial ribosomal protein bL32 family.

This chain is Large ribosomal subunit protein bL32, found in Vibrio cholerae serotype O1 (strain ATCC 39541 / Classical Ogawa 395 / O395).